The following is a 37-amino-acid chain: Cytochrome b6-f complex subunit 5 (37 aa).

The chain crosses the membrane as a helical span at residues 5 to 25; sequence ILLGIVLGMVVVTLAGLFVAA.

The protein belongs to the PetG family. As to quaternary structure, the 4 large subunits of the cytochrome b6-f complex are cytochrome b6, subunit IV (17 kDa polypeptide, PetD), cytochrome f and the Rieske protein, while the 4 small subunits are PetG, PetL, PetM and PetN. The complex functions as a dimer.

Its subcellular location is the cellular thylakoid membrane. Component of the cytochrome b6-f complex, which mediates electron transfer between photosystem II (PSII) and photosystem I (PSI), cyclic electron flow around PSI, and state transitions. PetG is required for either the stability or assembly of the cytochrome b6-f complex. The polypeptide is Cytochrome b6-f complex subunit 5 (Synechococcus sp. (strain JA-2-3B'a(2-13)) (Cyanobacteria bacterium Yellowstone B-Prime)).